The chain runs to 1849 residues: NADH-ubiquinone oxidoreductase chain 5 (1849 aa).

Helical transmembrane passes span 76-93 (YLLLYYCIYALELYTVCY), 98-120 (LILLYLIQLNYILLTNIVGYLQY), 190-212 (YWLCVVIWNNIGWWTYQLMIIGW), 222-244 (LVPTILAIINLILTYIDLIIYLY), 279-301 (HLLTVIIPNYCLAIYNSGLILSS), 316-338 (LALQYLVAPLYISCSLLIYILCY), 358-380 (LEIIYLDILVNSLISIIILILSV), 390-412 (VIILSQYINIISGYVAMPTTILI), 419-441 (IAVYIYYLVDYIATISTLIIWLL), 483-505 (LLDAIMNVVTSVILLITVSCLGV), 510-532 (LFIAVYPVYCIGVLLLNTLLQVV), 536-558 (ISYIIGTFMNAIILICDIYVYSI), 565-587 (LIMYVYFVAAIILEPIIDIIHTI), 621-640 (IWLIADLILAYIDLIRSTLV), 683-705 (WVRFLIYCAGNNINLLVLLYVQF), 718-740 (LTRIQLYATIPVIISSYIYQGIL), 745-767 (IISYYNTLLVATLEFIQIWLTIL), 797-819 (PTWVLFECLSTCVGLVELYLVTV), 868-890 (ILLLMSSGLQSTVLNTIFDLLSL), 905-927 (LTVQVCTIPAALYSTIIYPYIVL), 966-988 (LYSYNLYLLELYNIYYFWLSLLE), 1008-1030 (PDLLISLISYIIDICILSLELLL), 1073-1095 (LTVVFYILNLCGILNEISIQILF), 1105-1127 (LATIYCTVVLPYILIILEILSYL), 1172-1194 (TYLLYIVLEQLLLVIIDLYIYII), 1219-1241 (VYFLYFMIFIGYLLCGIFAFFYH), 1248-1270 (GIFYLSEMIIMGILIFSIVTLYY), 1296-1318 (IITFDILSILGVLLVATLTAIIL), 1330-1352 (FAYNVLATLVLFSASIICFIVSY), 1357-1379 (MIIFWEISGTLSLFLIDMYYARI), 1418-1440 (LFALLPYAQFNLSILGNLIFDFT), 1444-1466 (VIVFSIFSAAACKCAQFLLFVWL), 1478-1500 (ALIHSSTLVVMGIFMILRFAPIL), 1504-1526 (VYTLYIMSILGSLTVAYGAILAT), 1533-1555 (KAVAYSTISQIGYLFTGCAFLAF), 1559-1581 (LIYLILHAICKALLFVLVGYIVH), 1602-1624 (IAIYMFILCMVLAGAPYTVGFFA), 1639-1661 (VATFIICCWIISFACTPFYLYRI), 1719-1741 (LLHLLLLLIVLFCGEFLVFLVTG), 1773-1795 (VRNIQLLIIVLFALVTLYITAIN), and 1802-1824 (IIYLSVVLPILAIIFICLGHYFL).

Belongs to the complex I subunit 5 family.

It localises to the hydrogenosome membrane. The enzyme catalyses a ubiquinone + NADH + 5 H(+)(in) = a ubiquinol + NAD(+) + 4 H(+)(out). This chain is NADH-ubiquinone oxidoreductase chain 5 (nad5), found in Nyctotherus ovalis.